We begin with the raw amino-acid sequence, 305 residues long: MVQESIISSFRGKLENDPSKSTSLATVETLLEVLDRSRATTVAEFQNELNQVVAALEKTDYSSTSIRSAADLFTRFTSLAPAALLDQEDFSQVLDLYRQRARSFIKNVRGSRAKISKCARLFFTHHMNILTHSYSKVVLETILDAHKSGYHLHVWVTESQPDASGKLVFEELKKNGVPTTLVLDSCVGYVMERIQAVLVGAEGVMETGGIINKIGTVNVCIIAKSRHVPVYVCAETIKFVREFPLNQADIPQEFKYRTSVIERNNLELEHPDVDYTAPEFLTLIITDVGAMKPEAVGEELIKMYI.

The protein belongs to the eIF-2B alpha/beta/delta subunits family. In terms of assembly, component of the translation initiation factor 2B (eIF2B) complex which is a heterodecamer of two sets of five different subunits: alpha, beta, gamma, delta and epsilon. Subunits alpha, beta and delta comprise a regulatory subcomplex and subunits epsilon and gamma comprise a catalytic subcomplex. Within the complex, the hexameric regulatory complex resides at the center, with the two heterodimeric catalytic subcomplexes bound on opposite sides.

The protein localises to the cytoplasm. It localises to the cytosol. Acts as a component of the translation initiation factor 2B (eIF2B) complex, which catalyzes the exchange of GDP for GTP on eukaryotic initiation factor 2 (eIF2) gamma subunit. Its guanine nucleotide exchange factor activity is repressed when bound to eIF2 complex phosphorylated on the alpha subunit, thereby limiting the amount of methionyl-initiator methionine tRNA available to the ribosome and consequently global translation is repressed. This chain is Translation initiation factor eIF2B subunit alpha, found in Caenorhabditis elegans.